Here is a 509-residue protein sequence, read N- to C-terminus: Probable malate:quinone oxidoreductase (509 aa).

Residues 490 to 509 are disordered; it reads LGLNEKEPVSGASEKELVYS. The segment covering 493 to 509 has biased composition (basic and acidic residues); it reads NEKEPVSGASEKELVYS.

Belongs to the MQO family. FAD is required as a cofactor.

It carries out the reaction (S)-malate + a quinone = a quinol + oxaloacetate. Its pathway is carbohydrate metabolism; tricarboxylic acid cycle; oxaloacetate from (S)-malate (quinone route): step 1/1. The sequence is that of Probable malate:quinone oxidoreductase from Geobacillus sp. (strain WCH70).